A 342-amino-acid chain; its full sequence is DNA repair protein RAD51 homolog 1 (342 aa).

Positions 1–24 (MTTMEQRRNQNAVQQQDDEETQHG) are disordered. The HhH domain occupies 51 to 80 (TVEGVAYTPRKDLLQIKGISDAKVDKIVEA). Residues 100 to 314 (QEIIQITSGS…LRKGRAEERI (215 aa)) enclose the FtsK domain. 130 to 137 (GEFRSGKT) lines the ATP pocket.

This sequence belongs to the RecA family. RAD51 subfamily. In terms of assembly, self-associates and interacts with XRCC3. Binds to RAD54/CHR25. Interacts with BRCA2A and BRCA2B. Can form a tripartite complex with both BRCA2B and DSS1(I). Detected in various tissues. Higher expression in reproductive tissues than in vegetative tissues, with the highest expression level in young flower buds. At cellular level, is expressed at low levels in flower primordia, then at higher levels in young anthers and at highest levels in both females and males meiocytes. Not detected in gametophytes.

The protein resides in the nucleus. Its function is as follows. Binds to single and double-stranded DNA and exhibits DNA-dependent ATPase activity. Unwinds duplex DNA. Component of the meiotic recombination pathway. Seems to play a role in mediating chromosome homology search, chromosome pairing and synapsis at early stages and probably chromosome crossing-over at later stages in meiosis. Probably is involved in the repair of meiotic double strand breaks (DBSs) generated by AtSPO11-1 and in homologous recombination. Its function is dispensable for vegetative growth and root mitosis. In Arabidopsis thaliana (Mouse-ear cress), this protein is DNA repair protein RAD51 homolog 1.